The chain runs to 269 residues: Phosphonates import ATP-binding protein PhnC (269 aa).

The ABC transporter domain occupies 2 to 245 (LVVEGLTCRF…VARELYDLEA (244 aa)). 34 to 41 (GRSGAGKS) contacts ATP.

The protein belongs to the ABC transporter superfamily. Phosphonates importer (TC 3.A.1.9.1) family. As to quaternary structure, the complex is composed of two ATP-binding proteins (PhnC), two transmembrane proteins (PhnE) and a solute-binding protein (PhnD).

The protein localises to the cell inner membrane. It catalyses the reaction phosphonate(out) + ATP + H2O = phosphonate(in) + ADP + phosphate + H(+). In terms of biological role, part of the ABC transporter complex PhnCDE involved in phosphonates import. Responsible for energy coupling to the transport system. The protein is Phosphonates import ATP-binding protein PhnC of Bradyrhizobium diazoefficiens (strain JCM 10833 / BCRC 13528 / IAM 13628 / NBRC 14792 / USDA 110).